A 230-amino-acid chain; its full sequence is Rab15 effector protein (230 aa).

The N-myristoyl glycine moiety is linked to residue Gly2.

In terms of assembly, interacts with the GTP-bound form of RAB15, RAB3A-D and RAB34.

It localises to the early endosome membrane. Effector that interacts with Rab GTPases in their active form (GTP-bound) including RAB15, RAB3A-D and RAB34. Controls downstream signaling such as cell proliferation and cell migration. Also regulates transferrin receptor recycling from the endocytic recycling compartment. This is Rab15 effector protein from Mus musculus (Mouse).